A 196-amino-acid chain; its full sequence is Putative NADH dehydrogenase/NAD(P)H nitroreductase PXO_03909 (196 aa).

It belongs to the nitroreductase family. HadB/RutE subfamily. FMN serves as cofactor.

In Xanthomonas oryzae pv. oryzae (strain PXO99A), this protein is Putative NADH dehydrogenase/NAD(P)H nitroreductase PXO_03909.